A 403-amino-acid polypeptide reads, in one-letter code: Argininosuccinate synthase (403 aa).

10-18 (AYSGGLDTS) is a binding site for ATP. Residue Tyr-87 coordinates L-citrulline. An ATP-binding site is contributed by Gly-117. Residues Thr-119, Asn-123, and Asp-124 each contribute to the L-aspartate site. Residue Asn-123 coordinates L-citrulline. 4 residues coordinate L-citrulline: Arg-127, Ser-175, Glu-260, and Tyr-272.

This sequence belongs to the argininosuccinate synthase family. Type 1 subfamily. In terms of assembly, homotetramer.

The protein localises to the cytoplasm. It catalyses the reaction L-citrulline + L-aspartate + ATP = 2-(N(omega)-L-arginino)succinate + AMP + diphosphate + H(+). It functions in the pathway amino-acid biosynthesis; L-arginine biosynthesis; L-arginine from L-ornithine and carbamoyl phosphate: step 2/3. In Bacillus subtilis (strain 168), this protein is Argininosuccinate synthase.